An 81-amino-acid chain; its full sequence is Antimicrobial peptide D2 (81 aa).

The first 31 residues, 1-31 (MAKTVLGIHVTFLTLLFAVILLNDVMYTPVE), serve as a signal peptide directing secretion. 4 disulfide bridges follow: Cys34–Cys81, Cys45–Cys66, Cys51–Cys75, and Cys55–Cys77.

Antimicrobial peptide probably active against fungi like B.sorokiniana, F.oxysporum, F.graminearum, F.avenaceum, B.cinerea, P.beta, P.infestans and P.debaryanum. This chain is Antimicrobial peptide D2, found in Stellaria media (Common chickweed).